A 246-amino-acid polypeptide reads, in one-letter code: UPF0309 protein OB3413 (246 aa).

The region spanning 33–212 (MATAVMNGNS…VLKMIEIFEE (180 aa)) is the SIS domain.

It belongs to the UPF0309 family.

The polypeptide is UPF0309 protein OB3413 (Oceanobacillus iheyensis (strain DSM 14371 / CIP 107618 / JCM 11309 / KCTC 3954 / HTE831)).